Here is a 657-residue protein sequence, read N- to C-terminus: Trifunctional protein RibF/MnmA (657 aa).

The FMN adenylyltransferase stretch occupies residues 1–141 (MLSIINLTSK…VVKKDHCSTS (141 aa)). The interval 158 to 282 (LLLTPFYLKG…DKKAALSFFH (125 aa)) is riboflavin kinase. Residues 283–657 (KQEKPKVVVA…GGGKITKIIK (375 aa)) form a tRNA-specific 2-thiouridylase MnmA region. Residues 292 to 299 (ALSGGVDS) and Met318 contribute to the ATP site. The tract at residues 389–391 (NPD) is interaction with target base in tRNA. The active-site Nucleophile is the Cys394. Cys394 and Cys492 are joined by a disulfide. Gly420 serves as a coordination point for ATP. The interval 442-444 (KDQ) is interaction with tRNA. Residue Cys492 is the Cysteine persulfide intermediate of the active site.

In the N-terminal section; belongs to the RibF family. The protein in the C-terminal section; belongs to the MnmA/TRMU family.

The protein localises to the cytoplasm. It carries out the reaction riboflavin + ATP = FMN + ADP + H(+). The catalysed reaction is FMN + ATP + H(+) = FAD + diphosphate. The enzyme catalyses S-sulfanyl-L-cysteinyl-[protein] + uridine(34) in tRNA + AH2 + ATP = 2-thiouridine(34) in tRNA + L-cysteinyl-[protein] + A + AMP + diphosphate + H(+). The protein operates within cofactor biosynthesis; FAD biosynthesis; FAD from FMN: step 1/1. Its pathway is cofactor biosynthesis; FMN biosynthesis; FMN from riboflavin (ATP route): step 1/1. Involved in FAD and FMN biosynthesis. Its function is as follows. Catalyzes the 2-thiolation of uridine at the wobble position (U34) of tRNA, leading to the formation of s(2)U34. The polypeptide is Trifunctional protein RibF/MnmA (ribF/mnmA) (Mycoplasmoides gallisepticum (strain R(low / passage 15 / clone 2)) (Mycoplasma gallisepticum)).